Here is a 444-residue protein sequence, read N- to C-terminus: Maintenance of mitochondrial morphology protein 1 (444 aa).

Positions M1–R16 are enriched in polar residues. The tract at residues M1–G20 is disordered. Over M1 to G107 the chain is Lumenal. Residues L108–F128 traverse the membrane as a helical segment. The Cytoplasmic segment spans residues S129–E444. The segment at G136–S157 is disordered. Over residues S142 to S157 the composition is skewed to low complexity. Residues S204–P418 enclose the SMP-LTD domain. Positions K425 to E444 are disordered. The segment covering N426–E444 has biased composition (basic and acidic residues).

It belongs to the MMM1 family. Homodimer. Component of the ER-mitochondria encounter structure (ERMES) or MDM complex, composed of MMM1, MDM10, MDM12 and MDM34. An MMM1 homodimer associates with one molecule of MDM12 on each side in a pairwise head-to-tail manner, and the SMP-LTD domains of MMM1 and MDM12 generate a continuous hydrophobic tunnel for phospholipid trafficking.

Its subcellular location is the endoplasmic reticulum membrane. Functionally, component of the ERMES/MDM complex, which serves as a molecular tether to connect the endoplasmic reticulum (ER) and mitochondria. Components of this complex are involved in the control of mitochondrial shape and protein biogenesis, and function in nonvesicular lipid trafficking between the ER and mitochondria. The MDM12-MMM1 subcomplex functions in the major beta-barrel assembly pathway that is responsible for biogenesis of all outer membrane beta-barrel proteins, and acts in a late step after the SAM complex. The MDM10-MDM12-MMM1 subcomplex further acts in the TOM40-specific pathway after the action of the MDM12-MMM1 complex. Essential for establishing and maintaining the structure of mitochondria and maintenance of mtDNA nucleoids. The sequence is that of Maintenance of mitochondrial morphology protein 1 from Eremothecium gossypii (strain ATCC 10895 / CBS 109.51 / FGSC 9923 / NRRL Y-1056) (Yeast).